Reading from the N-terminus, the 363-residue chain is Phospho-N-acetylmuramoyl-pentapeptide-transferase (363 aa).

The next 11 helical transmembrane spans lie at Ala-27–Ala-47, Thr-76–Leu-96, Thr-97–Ala-117, Leu-137–Ala-157, Trp-171–Gly-191, Gly-202–Val-222, Val-226–Cys-246, Ala-248–Met-268, Thr-271–Leu-291, Val-292–Phe-312, and Lys-340–Leu-360.

This sequence belongs to the glycosyltransferase 4 family. MraY subfamily. Requires Mg(2+) as cofactor.

The protein localises to the cell inner membrane. It catalyses the reaction UDP-N-acetyl-alpha-D-muramoyl-L-alanyl-gamma-D-glutamyl-meso-2,6-diaminopimeloyl-D-alanyl-D-alanine + di-trans,octa-cis-undecaprenyl phosphate = di-trans,octa-cis-undecaprenyl diphospho-N-acetyl-alpha-D-muramoyl-L-alanyl-D-glutamyl-meso-2,6-diaminopimeloyl-D-alanyl-D-alanine + UMP. It participates in cell wall biogenesis; peptidoglycan biosynthesis. Its function is as follows. Catalyzes the initial step of the lipid cycle reactions in the biosynthesis of the cell wall peptidoglycan: transfers peptidoglycan precursor phospho-MurNAc-pentapeptide from UDP-MurNAc-pentapeptide onto the lipid carrier undecaprenyl phosphate, yielding undecaprenyl-pyrophosphoryl-MurNAc-pentapeptide, known as lipid I. In Gluconacetobacter diazotrophicus (strain ATCC 49037 / DSM 5601 / CCUG 37298 / CIP 103539 / LMG 7603 / PAl5), this protein is Phospho-N-acetylmuramoyl-pentapeptide-transferase.